The primary structure comprises 264 residues: Meiotic recombination protein REC102 (264 aa).

Residues 200-221 are leucine-zipper; the sequence is LKWQQSSLAPISYALTSNSVLL.

The protein belongs to the TOP6B-like family. In terms of assembly, interacts with REC104; seems to form a functional unit with REC104. REC102-REC104 interacts with SKI8-SPO11 and this interaction is required for proper subcellular location of the proteins during the initiation of recombination. Interacts with MEI4, REC114 and SPO11.

It is found in the nucleus. Functionally, required for formation of the SPO11-mediated double-strand breaks (DSBs) that initiate meiotic recombination. May mediate the interaction between SPO11 subunits during meiosis. Also needed for homolog chromosome pairing, synaptonemal complex formation, and for the proper timing of the first meiotic division. Not required for mitosis and mitotic DNA repair mechanisms. The sequence is that of Meiotic recombination protein REC102 (REC102) from Saccharomyces cerevisiae (strain RM11-1a) (Baker's yeast).